The primary structure comprises 469 residues: Argininosuccinate lyase (469 aa).

The protein belongs to the lyase 1 family. Argininosuccinate lyase subfamily.

The protein resides in the cytoplasm. It catalyses the reaction 2-(N(omega)-L-arginino)succinate = fumarate + L-arginine. It functions in the pathway amino-acid biosynthesis; L-arginine biosynthesis; L-arginine from L-ornithine and carbamoyl phosphate: step 3/3. The chain is Argininosuccinate lyase from Burkholderia vietnamiensis (strain G4 / LMG 22486) (Burkholderia cepacia (strain R1808)).